Reading from the N-terminus, the 492-residue chain is MSLLKMEYNLYAELKKMTCGQPISLFNEDGDFVEVEPGSSFKFLIPKGFYASTSVKTSLVFETLTTTDNKITSINPTNAPKLYPLQRKVVSEVVSNMRKMIELKRPLYITLHLACGFGKTITTCYLMATHGRKTVICVPNKMLIHQWKTQVEAVGLEHKISIDGVSSLLKELKTQSPDVLIVVSRHLTNDAFCKYINKHYDLFILDESHTYNLMNNTAVTRFLAYYPLMMCYFLTATPRPANRIYCNSIINIAKLSDLKKTIYAVDSFFEPYSTDNIRHMVKRLDSPSNKYHIYTEKLLSVDEPRNQLILDTLVEEFKSGTINRILVITKLREHMVLFYKRLLDIFGPEVVFIGDAQNRRTPDMVKSIKDLNRFIFVSTLFYSGTGLDIPSLDSLFICSAVINNMQIEQLLGRVCRETELLDRTVYVFPSTSIKEIKYVIGNFVQRIISLSVDKLGFKQESYRKHQESEPASVPTSSREERVLNRIFNSQNR.

The Helicase ATP-binding domain maps to 100–256; that stretch reads MIELKRPLYI…NSIINIAKLS (157 aa). 113–120 provides a ligand contact to ATP; the sequence is LACGFGKT. Positions 206–209 match the DESH box motif; it reads DESH.

Belongs to the helicase family. Poxviruses subfamily. Interacts with G2. Might be part of a transcription complex composed at least of G2, A18, and H5.

It localises to the virion. In terms of biological role, DNA helicase which seems to act as a postreplicative transcription termination factor. Involved in ATP-dependent release of nascent RNA. Forms a stable complex with single-stranded DNA, and to a lesser extent RNA. This chain is Transcript termination protein A18, found in Bos taurus (Bovine).